A 312-amino-acid chain; its full sequence is 2-aminophenol 1,6-dioxygenase subunit beta (312 aa).

3 residues coordinate Fe cation: His13, His62, and Glu251.

The protein belongs to the LigB/MhpB extradiol dioxygenase family. The APD complex is a heterotetramer of 2 alpha (CnbCa) and 2 beta (CnbCb) subunits. Requires Fe(2+) as cofactor.

The catalysed reaction is 2-aminophenol + O2 = 2-aminomuconate 6-semialdehyde. The enzyme catalyses 2-amino-5-chlorophenol + O2 = 2-amino-5-chloromuconate 6-semialdehyde. Its pathway is xenobiotic degradation; nitrobenzene degradation. It participates in xenobiotic degradation; 4-chloronitrobenzene degradation. Its activity is regulated as follows. Complete loss of activity in the presence of Ni(2+), Co(2+), Cd(2+), Zn(2+) and hydrogen peroxide, however activity with hydrogen peroxide partially restored upon addition of excess ascorbate. Partially inhibited by Fe(2+), Mg(2+), Ca(2+), Mn(2+), Cu(2+) and also by EDTA, at 2 mM concentration. Total activity inhibited in the presence of catechol or 4-nitrocatechol but completely restored after removal of catechol and addition of 2 mM Fe(2+) and 5 mM ascorbate. Component of the 2-aminophenol 1,6-dioxygenase (APD) complex that catalyzes the ring fission of 2-aminophenol to produce 2-aminomuconic semialdehyde. CnbCb seems to be the catalytic subunit of the complex. Also active on other substrates such as 2-amino-5-chlorophenol (68% activity), protocatechuate (33% activity) and catechol (5% activity). Both 2-aminophenol and 2-amino-5-cholorophenol are likely native substrates for this dioxygenase which is involved in the reductive degradation pathway of both nitrobenzene (NB) and 4-chloronitrobenzene (4-CNB), allowing C.testosteroni strain CNB-1 to grow on these compounds as sole source of carbon, nitrogen, and energy. The chain is 2-aminophenol 1,6-dioxygenase subunit beta from Comamonas testosteroni (Pseudomonas testosteroni).